Here is a 181-residue protein sequence, read N- to C-terminus: Transcriptional repressor NrdR (181 aa).

Residues 3-34 (CPFCRHPDSRVVDSREAEEGSAIRRRRSCLSC) fold into a zinc finger. One can recognise an ATP-cone domain in the interval 46 to 136 (LQVRKRSGAA…VYLAFESLTD (91 aa)). The tract at residues 148–181 (AAGPPTTRDGPARPVPRGAVDVSPVIGTQQVHSR) is disordered.

It belongs to the NrdR family. Zn(2+) serves as cofactor.

Functionally, negatively regulates transcription of bacterial ribonucleotide reductase nrd genes and operons by binding to NrdR-boxes. The sequence is that of Transcriptional repressor NrdR from Frankia casuarinae (strain DSM 45818 / CECT 9043 / HFP020203 / CcI3).